A 214-amino-acid polypeptide reads, in one-letter code: MEPGLWLLLGLTVTSAAGLVPCPQSGDSGRASVSQGPPEAGSERGCEETVAGPGERIVSPTVALPAQPESAGQERAPGRSGKQEDKGLPAHHRPRRCTCFTYKDKECVYYCHLDIIWINTPEQTVPYGLSNYRESLRGKRSLGPVPESSQPSPWTRLRCTCMGADDKACAHFCARTRDVTSYSGRAERPAAEEMRETGGPRQRLMSRTDKAHRP.

The signal sequence occupies residues 1–16; it reads MEPGLWLLLGLTVTSA. Positions 17–94 are excised as a propeptide; the sequence is AGLVPCPQSG…DKGLPAHHRP (78 aa). The tract at residues 24 to 91 is disordered; that stretch reads QSGDSGRASV…KQEDKGLPAH (68 aa). A compositionally biased stretch (polar residues) spans 25–35; sequence SGDSGRASVSQ. Intrachain disulfides connect Cys-97-Cys-111 and Cys-99-Cys-107. Residues 118 to 214 constitute a propeptide that is removed on maturation; the sequence is INTPEQTVPY…MSRTDKAHRP (97 aa). The endothelin-like stretch occupies residues 159–173; the sequence is CTCMGADDKACAHFC. The tract at residues 183 to 214 is disordered; sequence SGRAERPAAEEMRETGGPRQRLMSRTDKAHRP. Positions 185 to 198 are enriched in basic and acidic residues; the sequence is RAERPAAEEMRETG.

Belongs to the endothelin/sarafotoxin family.

It is found in the secreted. In terms of biological role, endothelins are endothelium-derived vasoconstrictor peptides. This Mus musculus (Mouse) protein is Endothelin-3 (Edn3).